The primary structure comprises 302 residues: Large ribosomal subunit protein uL4m (302 aa).

This sequence belongs to the universal ribosomal protein uL4 family. Component of the mitochondrial ribosome large subunit (39S) which comprises a 16S rRNA and about 50 distinct proteins.

The protein resides in the mitochondrion. The polypeptide is Large ribosomal subunit protein uL4m (mrpl4) (Danio rerio (Zebrafish)).